Here is a 149-residue protein sequence, read N- to C-terminus: NPC intracellular cholesterol transporter 2 (149 aa).

An N-terminal signal peptide occupies residues 1–19 (MRFLAATILLLALVAASQA). Intrachain disulfides connect C27–C140, C42–C47, and C93–C99. N-linked (GlcNAc...) asparagine glycosylation is found at N58 and N69. K116 is subject to N6-acetyllysine.

The protein belongs to the NPC2 family. In terms of assembly, interacts with NPC1 (via the second lumenal domain) in a cholestrol-dependent manner. Interacts with NUS1/NgBR, the interaction stabilizes NCP2 and regulates cholesterol trafficking. Interacts with DHDDS. Interacts with NEDD4L (via C2 domain). Interacts with NPC1L1. In terms of processing, N-glycosylated. Detected in liver and bile. Detected in epididymis (at protein level). Detected in caput epididymis, corpus epididymis, cauda epididymis and ovary.

The protein resides in the secreted. The protein localises to the endoplasmic reticulum. It is found in the lysosome. The enzyme catalyses cholesterol(in) = cholesterol(out). Functionally, intracellular cholesterol transporter which acts in concert with NPC1 and plays an important role in the egress of cholesterol from the lysosomal compartment. Unesterified cholesterol that has been released from LDLs in the lumen of the late endosomes/lysosomes is transferred by NPC2 to the cholesterol-binding pocket in the N-terminal domain of NPC1. May bind and mobilize cholesterol that is associated with membranes. NPC2 binds cholesterol with a 1:1 stoichiometry. Can bind a variety of sterols, including lathosterol, desmosterol and the plant sterols stigmasterol and beta-sitosterol. The secreted form of NCP2 regulates biliary cholesterol secretion via stimulation of ABCG5/ABCG8-mediated cholesterol transport. The protein is NPC intracellular cholesterol transporter 2 of Mus musculus (Mouse).